Consider the following 735-residue polypeptide: MAAGGAVAAAPECRLLPYALHKWSSFSSTYLPENILVDKPNDQSSRWSSESNYPPQYLILKLERPAIVQNITFGKYEKTHVCNLKKFKVFGGMNEENMTELLSSGLKNDYNKETFTLKHKIDEQMFPCRFIKIVPLLSWGPSFNFSIWYVELSGIDDPDIVQPCLNWYSKYREQEAIRLCLKHFRQHNYTEAFESLQKKTKIALEHPMLTDIHDKLVLKGDFDACEELIEKAVNDGLFNQYISQQEYKPRWSQIIPKSTKGDGEDNRPGMRGGHQMVIDVQTETVYLFGGWDGTQDLADFWAYSVKENQWTCISRDTEKENGPSARSCHKMCIDIQRRQIYTLGRYLDSSVRNSKSLKSDFYRYDIDTNTWMLLSEDTAADGGPKLVFDHQMCMDSEKHMIYTFGGRILTCNGSVDDSRASEPQFSGLFAFNCQCQTWKLLREDSCNAGPEDIQSRIGHCMLFHSKNRCLYVFGGQRSKTYLNDFFSYDVDSDHVDIISDGTKKDSGMVPMTGFTQRATIDPELNEIHVLSGLSKDKEKREENVRNSFWIYDIVRNSWSCVYKNDQAAKDNPTKSLQEEEPCPRFAHQLVYDELHKVHYLFGGNPGKSCSPKMRLDDFWSLKLCRPSKDYLLRHCKYLIRKHRFEEKAQVDPLSALKYLQNDLYITVDHSDPEETKEFQLLASALFKSGSDFTALGFSDVDHTYAQRTQLFDTLVNFFPDSMTPPKGNLVDLITL.

Alanine 2 is modified (N-acetylalanine). The region spanning 172-204 (REQEAIRLCLKHFRQHNYTEAFESLQKKTKIAL) is the LisH domain. In terms of domain architecture, CTLH spans 206 to 258 (HPMLTDIHDKLVLKGDFDACEELIEKAVNDGLFNQYISQQEYKPRWSQIIPKS). Kelch repeat units follow at residues 284-330 (TVYL…SCHK), 339-391 (QIYT…FDHQ), 408-458 (ILTC…SRIG), 469-515 (CLYV…TGFT), 526-578 (EIHV…SLQE), and 597-651 (VHYL…AQVD).

In terms of assembly, homodimer; may form higher oligomers. Identified in the CTLH complex that contains GID4, RANBP9 and/or RANBP10, MKLN1, MAEA, RMND5A (or alternatively its paralog RMND5B), GID8, ARMC8, WDR26 and YPEL5. Within this complex, MAEA, RMND5A (or alternatively its paralog RMND5B), GID8, WDR26, and RANBP9 and/or RANBP10 form the catalytic core, while GID4, MKLN1, ARMC8 and YPEL5 have ancillary roles. Interacts with RANBP9. Part of a complex consisting of RANBP9, MKLN1 and GID8. Interacts with GABRA1. Interacts with the C-terminal tail of PTGER3.

It localises to the cytoplasm. Its subcellular location is the cytosol. It is found in the nucleus. The protein resides in the nucleoplasm. The protein localises to the cell projection. It localises to the ruffle. Its subcellular location is the cell cortex. It is found in the synapse. The protein resides in the postsynapse. Component of the CTLH E3 ubiquitin-protein ligase complex that selectively accepts ubiquitin from UBE2H and mediates ubiquitination and subsequent proteasomal degradation of the transcription factor HBP1. Required for internalization of the GABA receptor GABRA1 from the cell membrane via endosomes and subsequent GABRA1 degradation. Acts as a mediator of cell spreading and cytoskeletal responses to the extracellular matrix component THBS1. In Homo sapiens (Human), this protein is Muskelin (MKLN1).